The primary structure comprises 509 residues: Glycogen synthase 2 (509 aa).

ADP-alpha-D-glucose is bound at residue K15.

The protein belongs to the glycosyltransferase 1 family. Bacterial/plant glycogen synthase subfamily.

It catalyses the reaction [(1-&gt;4)-alpha-D-glucosyl](n) + ADP-alpha-D-glucose = [(1-&gt;4)-alpha-D-glucosyl](n+1) + ADP + H(+). The protein operates within glycan biosynthesis; glycogen biosynthesis. Its function is as follows. Synthesizes alpha-1,4-glucan chains using ADP-glucose. In Agrobacterium fabrum (strain C58 / ATCC 33970) (Agrobacterium tumefaciens (strain C58)), this protein is Glycogen synthase 2 (glgA2).